The chain runs to 440 residues: Oligodendrocyte-myelin glycoprotein (440 aa).

Positions 1 to 24 are cleaved as a signal peptide; that stretch reads MEYQILKMSSCLFILLFLTPGILC. Residues 25–55 enclose the LRRNT domain; the sequence is ICPLQCTCTERHRHVDCSGRNLTTLPPGLQE. 2 N-linked (GlcNAc...) asparagine glycosylation sites follow: Asn-45 and Asn-61. LRR repeat units follow at residues 56–78, 79–100, 101–121, 124–145, 147–168, 169–189, 192–213, and 216–239; these read NIIH…TPYT, NLRT…LPRS, LWNM…DTAY, NLKY…KNTL, SLEV…MPSK, LHIV…TLIN, NLTH…SFDQ, and QLQE…TYLL. The N-linked (GlcNAc...) asparagine glycan is linked to Asn-103. N-linked (GlcNAc...) asparagine glycosylation is found at Asn-152, Asn-176, Asn-189, Asn-192, and Asn-234. Ser/Thr-rich repeat units lie at residues 229 to 270, 271 to 292, 293 to 335, 336 to 377, and 378 to 416; these read CDHK…YPTP, PGFT…INSL, SMVT…VAYP, EDTP…PPSP, and VTLS…TRPP. 2 N-linked (GlcNAc...) asparagine glycosylation sites follow: Asn-364 and Asn-389. Ser-417 carries the GPI-anchor amidated serine lipid modification. A propeptide spans 418–440 (removed in mature form); it reads AASAWKVNASLLLMLNAVVMLAG. Residue Asn-425 is glycosylated (N-linked (GlcNAc...) asparagine).

As to quaternary structure, binds to RTN4R. O-glycosylated in its Ser/Thr-rich repeat domain. As to expression, oligodendrocytes and myelin of the central nervous system.

The protein localises to the cell membrane. Its function is as follows. Cell adhesion molecule contributing to the interactive process required for myelination in the central nervous system. In Mus musculus (Mouse), this protein is Oligodendrocyte-myelin glycoprotein (Omg).